The following is a 206-amino-acid chain: Histidine biosynthesis bifunctional protein HisIE (206 aa).

Positions 1-117 (MCNEPATSDV…SCFPAAPGQF (117 aa)) are phosphoribosyl-AMP cyclohydrolase. The phosphoribosyl-ATP pyrophosphohydrolase stretch occupies residues 118–206 (LGALDALVAE…AVTVLEARHR (89 aa)).

In the N-terminal section; belongs to the PRA-CH family. The protein in the C-terminal section; belongs to the PRA-PH family.

It is found in the cytoplasm. It catalyses the reaction 1-(5-phospho-beta-D-ribosyl)-ATP + H2O = 1-(5-phospho-beta-D-ribosyl)-5'-AMP + diphosphate + H(+). It carries out the reaction 1-(5-phospho-beta-D-ribosyl)-5'-AMP + H2O = 1-(5-phospho-beta-D-ribosyl)-5-[(5-phospho-beta-D-ribosylamino)methylideneamino]imidazole-4-carboxamide. It functions in the pathway amino-acid biosynthesis; L-histidine biosynthesis; L-histidine from 5-phospho-alpha-D-ribose 1-diphosphate: step 2/9. The protein operates within amino-acid biosynthesis; L-histidine biosynthesis; L-histidine from 5-phospho-alpha-D-ribose 1-diphosphate: step 3/9. The protein is Histidine biosynthesis bifunctional protein HisIE (hisI) of Xylella fastidiosa (strain Temecula1 / ATCC 700964).